We begin with the raw amino-acid sequence, 231 residues long: Ribonuclease HII (231 aa).

One can recognise an RNase H type-2 domain in the interval 33–222 (WPVAGADEAG…FREAQEQPLA (190 aa)). The a divalent metal cation site is built by Asp-39, Glu-40, and Asp-130.

It belongs to the RNase HII family. Mn(2+) serves as cofactor. Requires Mg(2+) as cofactor.

The protein resides in the cytoplasm. It catalyses the reaction Endonucleolytic cleavage to 5'-phosphomonoester.. In terms of biological role, endonuclease that specifically degrades the RNA of RNA-DNA hybrids. The protein is Ribonuclease HII of Sinorhizobium fredii (strain NBRC 101917 / NGR234).